The sequence spans 133 residues: Large ribosomal subunit protein bL12 (133 aa).

Belongs to the bacterial ribosomal protein bL12 family. Homodimer. Part of the ribosomal stalk of the 50S ribosomal subunit. Forms a multimeric L10(L12)X complex, where L10 forms an elongated spine to which 2 to 4 L12 dimers bind in a sequential fashion. Binds GTP-bound translation factors.

Functionally, forms part of the ribosomal stalk which helps the ribosome interact with GTP-bound translation factors. Is thus essential for accurate translation. The sequence is that of Large ribosomal subunit protein bL12 from Trichodesmium erythraeum (strain IMS101).